A 413-amino-acid chain; its full sequence is Eukaryotic initiation factor 4A-8 (413 aa).

The short motif at 40-68 (DSFDAMGLQENLLRGIYAYGFEKPSAIQQ) is the Q motif element. The Helicase ATP-binding domain maps to 71-241 (IVPFCKGLDV…RKFMNKPVRI (171 aa)). 84–91 (AQSGTGKT) provides a ligand contact to ATP. Positions 189 to 192 (DEAD) match the DEAD box motif. The 162-residue stretch at 252 to 413 (GIKQFYVNVD…ELPSNVADLL (162 aa)) folds into the Helicase C-terminal domain.

Belongs to the DEAD box helicase family. eIF4A subfamily. In terms of assembly, eIF4F is a multi-subunit complex, the composition of which varies with external and internal environmental conditions. It is composed of at least EIF4A, EIF4E and EIF4G. Pollen specific.

It catalyses the reaction ATP + H2O = ADP + phosphate + H(+). Its function is as follows. ATP-dependent RNA helicase which is a subunit of the eIF4F complex involved in cap recognition and is required for mRNA binding to ribosome. In the current model of translation initiation, eIF4A unwinds RNA secondary structures in the 5'-UTR of mRNAs which is necessary to allow efficient binding of the small ribosomal subunit, and subsequent scanning for the initiator codon. This chain is Eukaryotic initiation factor 4A-8, found in Nicotiana tabacum (Common tobacco).